We begin with the raw amino-acid sequence, 185 residues long: Elongation factor P (185 aa).

The protein belongs to the elongation factor P family.

Its subcellular location is the cytoplasm. Its pathway is protein biosynthesis; polypeptide chain elongation. Involved in peptide bond synthesis. Stimulates efficient translation and peptide-bond synthesis on native or reconstituted 70S ribosomes in vitro. Probably functions indirectly by altering the affinity of the ribosome for aminoacyl-tRNA, thus increasing their reactivity as acceptors for peptidyl transferase. The polypeptide is Elongation factor P (Paraburkholderia phytofirmans (strain DSM 17436 / LMG 22146 / PsJN) (Burkholderia phytofirmans)).